Reading from the N-terminus, the 266-residue chain is DNA primase (266 aa).

Positions 244–266 are disordered; it reads VTTTTTPSPPKIGSMQTTTKSTT. Positions 257 to 266 are enriched in polar residues; sequence SMQTTTKSTT.

It belongs to the baculoviridae LEF-1 family. As to quaternary structure, interacts with LEF-2.

Functionally, plays an essential role in viral DNA replication. May generates single-stranded DNA for both leading and lagging strand synthesis. The primase initiates primer synthesis and thereby produces large amount of short RNA primers on the lagging strand that the polymerase elongates using dNTPs. This Autographa californica nuclear polyhedrosis virus (AcMNPV) protein is DNA primase (LEF-1).